Consider the following 525-residue polypeptide: FNIP repeat-containing protein DDB_G0274617 (525 aa).

Residues 65–107 (YQHEIKKEMLPSSIISIIFYNIKNILSSDSIPDTVKFLGFNGY) form an FNIP repeat.

The polypeptide is FNIP repeat-containing protein DDB_G0274617 (Dictyostelium discoideum (Social amoeba)).